Reading from the N-terminus, the 334-residue chain is D-alanine--D-alanine ligase (334 aa).

One can recognise an ATP-grasp domain in the interval 124-329 (KMWFSALGIP…FAQYLSGNIL (206 aa)). Residue 154 to 209 (ALAKWGSIFIKAASQGSSVGCYRVDSIEQLASSLEEAFTFSPYVVIEKTITARELE) coordinates ATP. Mg(2+) contacts are provided by Asp283, Glu296, and Asn298.

This sequence belongs to the D-alanine--D-alanine ligase family. The cofactor is Mg(2+). Requires Mn(2+) as cofactor.

It is found in the cytoplasm. The catalysed reaction is 2 D-alanine + ATP = D-alanyl-D-alanine + ADP + phosphate + H(+). It participates in cell wall biogenesis; peptidoglycan biosynthesis. Its function is as follows. Cell wall formation. In Shewanella pealeana (strain ATCC 700345 / ANG-SQ1), this protein is D-alanine--D-alanine ligase.